Reading from the N-terminus, the 829-residue chain is Protein Jade-1 (829 aa).

A compositionally biased stretch (polar residues) spans 1–10 (MKRSRVPSTS). The segment at 1–40 (MKRSRVPSTSEDSDNGSNSTSWSQHSNSKHRKQSGKRPSE) is disordered. Residues 15-26 (NGSNSTSWSQHS) show a composition bias toward low complexity. The PHD-type 1 zinc finger occupies 196-246 (DVVCDVCQSPDGEDGNEMVFCDKCNICVHQACYGILKVPEGSWLCRTCALG). The C2HC pre-PHD-type zinc-finger motif lies at 248 to 282 (FPKCHLCPKKGGAMKPTRSGTKWVHVSCALWIPEV). A PHD-type 2 zinc finger spans residues 306–362 (LICCLCKEKTGACIQCSAKSCRVAFHVTCGLHCGLKMNTILTEADEVKFKSFCPKHS). 3 disordered regions span residues 368–408 (EEEG…PEET), 556–651 (PPVP…RRKS), and 697–829 (ATAP…VLAS). Over residues 374-390 (DRPVKVPTREDRSRNRG) the composition is skewed to basic and acidic residues. 3 stretches are compositionally biased toward polar residues: residues 394–405 (SASSQTRLSQNP), 570–586 (GQNS…NSYR), and 607–619 (SGDS…VMSA). A compositionally biased stretch (basic and acidic residues) spans 622–648 (RRSEGRTRSGESHRKEEESERPLEDRR). Residues 697–714 (ATAPNMYSGSPRKTNASH) show a composition bias toward polar residues. A compositionally biased stretch (basic and acidic residues) spans 738–754 (KRSERTSAGRQTERQEA). Positions 762-774 (SSLKTFSTSPSSP) are enriched in low complexity. Residues 782 to 792 (TGSENRRHLEE) are compositionally biased toward basic and acidic residues.

Belongs to the JADE family. Component of the HBO1 complex composed.

It is found in the nucleus. It localises to the chromosome. The protein resides in the cytoplasm. The protein localises to the cytoskeleton. Its subcellular location is the cilium basal body. In terms of biological role, scaffold subunit of some HBO1 complexes, which have a histone H4 acetyltransferase activity. Plays a key role in HBO1 complex by directing KAT7/HBO1 specificity towards histone H4 acetylation (H4K5ac, H4K8ac and H4K12ac), regulating DNA replication initiation, regulating DNA replication initiation. The sequence is that of Protein Jade-1 (jade1) from Danio rerio (Zebrafish).